The chain runs to 641 residues: SH2 domain-containing protein A (641 aa).

A disordered region spans residues 355-384 (VNGNGTSMEWRPQNHEEDNSSTDSENTEMR). Positions 547–641 (WIEGFVTKEE…SRLGRIIRGI (95 aa)) constitute an SH2 domain.

Post-translationally, phosphorylated on tyrosine residues. As to expression, expressed in roots, leaves, stems and flowers.

In Arabidopsis thaliana (Mouse-ear cress), this protein is SH2 domain-containing protein A.